A 106-amino-acid polypeptide reads, in one-letter code: UPF0145 protein PputW619_2377 (106 aa).

It belongs to the UPF0145 family.

The polypeptide is UPF0145 protein PputW619_2377 (Pseudomonas putida (strain W619)).